The primary structure comprises 241 residues: Carboxy-S-adenosyl-L-methionine synthase (241 aa).

S-adenosyl-L-methionine contacts are provided by residues Y38, 63 to 65, 88 to 89, 116 to 117, N131, and R198; these read GCS, DN, and DI.

This sequence belongs to the class I-like SAM-binding methyltransferase superfamily. Cx-SAM synthase family. As to quaternary structure, homodimer.

It carries out the reaction prephenate + S-adenosyl-L-methionine = carboxy-S-adenosyl-L-methionine + 3-phenylpyruvate + H2O. Its function is as follows. Catalyzes the conversion of S-adenosyl-L-methionine (SAM) to carboxy-S-adenosyl-L-methionine (Cx-SAM). The protein is Carboxy-S-adenosyl-L-methionine synthase of Glaesserella parasuis serovar 5 (strain SH0165) (Haemophilus parasuis).